We begin with the raw amino-acid sequence, 821 residues long: Glycogen phosphorylase (821 aa).

Residue lysine 667 is modified to N6-(pyridoxal phosphate)lysine.

The protein belongs to the glycogen phosphorylase family. It depends on pyridoxal 5'-phosphate as a cofactor.

It catalyses the reaction [(1-&gt;4)-alpha-D-glucosyl](n) + phosphate = [(1-&gt;4)-alpha-D-glucosyl](n-1) + alpha-D-glucose 1-phosphate. In terms of biological role, phosphorylase is an important allosteric enzyme in carbohydrate metabolism. Enzymes from different sources differ in their regulatory mechanisms and in their natural substrates. However, all known phosphorylases share catalytic and structural properties. The protein is Glycogen phosphorylase (glgP) of Haemophilus influenzae (strain ATCC 51907 / DSM 11121 / KW20 / Rd).